The primary structure comprises 309 residues: Elongation factor Ts (309 aa).

Residues 82-85 (TDFV) form an involved in Mg(2+) ion dislocation from EF-Tu region.

The protein belongs to the EF-Ts family.

The protein localises to the cytoplasm. Its function is as follows. Associates with the EF-Tu.GDP complex and induces the exchange of GDP to GTP. It remains bound to the aminoacyl-tRNA.EF-Tu.GTP complex up to the GTP hydrolysis stage on the ribosome. This chain is Elongation factor Ts, found in Rickettsia typhi (strain ATCC VR-144 / Wilmington).